A 301-amino-acid polypeptide reads, in one-letter code: MRTFQEIILALQHYWTRQGCALLQPYDMEVGAGTSHTATFLRALGPEPWKAAYVQPTRRPKDGRYGENPNRLQHYYQFQAVLKPAPSDILELYLGSLEELGFDLRQNDIRFVEDDWENPTLGAWGLGWEVWLNGMEVTQFTYFQQVGGMNCKPITGEITYGLERLAMYLQGVDNVFDLTWTKGLSYRDVYHQNEVEQSFYNFGHSDLDFLFQAFASHEAQARHLVEQGLPLPAYEQVLKAAHTFNLLDARGAISVTERAAYIGRIRELARSVAHAYYESRKRLGFPLAPVEWTQELLEKAA.

This sequence belongs to the class-II aminoacyl-tRNA synthetase family. Tetramer of two alpha and two beta subunits.

Its subcellular location is the cytoplasm. The catalysed reaction is tRNA(Gly) + glycine + ATP = glycyl-tRNA(Gly) + AMP + diphosphate. The sequence is that of Glycine--tRNA ligase alpha subunit from Nitrosospira multiformis (strain ATCC 25196 / NCIMB 11849 / C 71).